Here is a 407-residue protein sequence, read N- to C-terminus: GTPase Obg (407 aa).

In terms of domain architecture, Obg spans 1 to 159 (MKFVDEVSIR…RDLKLELKVL (159 aa)). The disordered stretch occupies residues 127–149 (NTRFKSSTNRAPRQTTPGKPGDQ). A compositionally biased stretch (polar residues) spans 129–143 (RFKSSTNRAPRQTTP). An OBG-type G domain is found at 160-333 (ADVGLLGLPN…LTRDIMRYLE (174 aa)). Residues 166–173 (GLPNAGKS), 191–195 (FTTLV), 213–216 (DIPG), 283–286 (NKCD), and 314–316 (SAI) each bind GTP. Residues serine 173 and threonine 193 each contribute to the Mg(2+) site. The interval 376 to 407 (SGVKSVHDIGDDDWDEEDVDDEDGPEIIYVRD) is disordered. Over residues 385-400 (GDDDWDEEDVDDEDGP) the composition is skewed to acidic residues.

Belongs to the TRAFAC class OBG-HflX-like GTPase superfamily. OBG GTPase family. As to quaternary structure, monomer. Mg(2+) is required as a cofactor.

It localises to the cytoplasm. In terms of biological role, an essential GTPase which binds GTP, GDP and possibly (p)ppGpp with moderate affinity, with high nucleotide exchange rates and a fairly low GTP hydrolysis rate. Plays a role in control of the cell cycle, stress response, ribosome biogenesis and in those bacteria that undergo differentiation, in morphogenesis control. This Pseudomonas savastanoi pv. phaseolicola (strain 1448A / Race 6) (Pseudomonas syringae pv. phaseolicola (strain 1448A / Race 6)) protein is GTPase Obg.